Reading from the N-terminus, the 137-residue chain is Bombinin-like peptides 1 (137 aa).

The first 18 residues, 1 to 18 (MNFKYIVAVSILIASAYA), serve as a signal peptide directing secretion. An Asparagine amide modification is found at Asn70. Residues 91–112 (LDSFEHPEEASEKETRGFNQEE) form a disordered region. D-allo-isoleucine is present on Ile118. The residue at position 136 (Ile136) is an Isoleucine amide.

The protein belongs to the bombinin family. In terms of tissue distribution, expressed by the skin glands.

The protein resides in the secreted. Its function is as follows. Has antimicrobial activity, but no hemolytic activity. Preliminary evidence indicates that this peptide does not lyse and thus kill the bacteria by its antimicrobial activity. In terms of biological role, bombinin H has antibacterial and hemolytic activity. The sequence is that of Bombinin-like peptides 1 from Bombina variegata (Yellow-bellied toad).